The sequence spans 505 residues: Deoxyguanosinetriphosphate triphosphohydrolase (505 aa).

The HD domain maps to 66 to 273 (RLTHSMEVQQ…MEAADDISYC (208 aa)).

This sequence belongs to the dGTPase family. Type 1 subfamily. As to quaternary structure, homotetramer. It depends on Mg(2+) as a cofactor.

The enzyme catalyses dGTP + H2O = 2'-deoxyguanosine + triphosphate + H(+). Its function is as follows. dGTPase preferentially hydrolyzes dGTP over the other canonical NTPs. The sequence is that of Deoxyguanosinetriphosphate triphosphohydrolase from Serratia proteamaculans (strain 568).